A 392-amino-acid chain; its full sequence is MANETLEDAVLASETLALAVELLKRRSVTPDDAGCHDLIAARLQALGFHIERHRHNDVDNLWARRGTASPVVCFAGHTDVVPPGPLEQWLSDPFEPTLRDGKLYARGAADMKTSDAAFVTATERFLARRPDHPGSIAFLLTSDEEGPATDGTVRVVEALKARGELLDYCIVGEPTSAAEFGDTIKNGRRGSLSGTLRVKGVQGHIAYPHLAKNPIHLAAPAIAELAETMWDEGNSYFPPTTWQISNIHAGTGVTNVIPGMVEIQFNFRFSTASTAEGLMDAVNEILDSHGLDYEIDWNLSGKPFLTPRGALCDRLSEAVHEVTGLTPELSTTGGTSDGRFIADICREVVEFGPLNMSIHKLNEHVALENVEQLAAVYEKALEKLLGESDERV.

Histidine 77 serves as a coordination point for Zn(2+). Aspartate 79 is an active-site residue. Aspartate 110 lines the Zn(2+) pocket. Catalysis depends on glutamate 144, which acts as the Proton acceptor. Residues glutamate 145, glutamate 173, and histidine 359 each contribute to the Zn(2+) site.

The protein belongs to the peptidase M20A family. DapE subfamily. In terms of assembly, homodimer. The cofactor is Zn(2+). It depends on Co(2+) as a cofactor.

The enzyme catalyses N-succinyl-(2S,6S)-2,6-diaminopimelate + H2O = (2S,6S)-2,6-diaminopimelate + succinate. It functions in the pathway amino-acid biosynthesis; L-lysine biosynthesis via DAP pathway; LL-2,6-diaminopimelate from (S)-tetrahydrodipicolinate (succinylase route): step 3/3. Functionally, catalyzes the hydrolysis of N-succinyl-L,L-diaminopimelic acid (SDAP), forming succinate and LL-2,6-diaminopimelate (DAP), an intermediate involved in the bacterial biosynthesis of lysine and meso-diaminopimelic acid, an essential component of bacterial cell walls. This chain is Succinyl-diaminopimelate desuccinylase, found in Thiobacillus denitrificans (strain ATCC 25259 / T1).